The sequence spans 109 residues: Aquaporin-2 (109 aa).

At 1–6 the chain is on the cytoplasmic side; that stretch reads SIAFSR. Residues 7–27 traverse the membrane as a helical segment; that stretch reads AVLSEFLATLLFVFFGLGSAL. Residues 28–35 are Extracellular-facing; that stretch reads NWPQALPS. A helical membrane pass occupies residues 36-54; that stretch reads VLQIAMAFGLAIGTLVQTL. Over 55-59 the chain is Cytoplasmic; the sequence is GHISG. The discontinuously helical intramembrane region spans 60 to 69; sequence AHINPAVTIA. An NPA 1 motif is present at residues 63–65; that stretch reads NPA. Topologically, residues 70 to 80 are cytoplasmic; that stretch reads CLVGCHVSFLR. The helical transmembrane segment at 81–102 threads the bilayer; the sequence is ALFYLAAQLLGAVAGAALLHEL. The Extracellular portion of the chain corresponds to 103–109; that stretch reads TPPDIRG.

The protein belongs to the MIP/aquaporin (TC 1.A.8) family. Homotetramer. Post-translationally, serine phosphorylation is necessary and sufficient for expression at the apical membrane. Endocytosis is not phosphorylation-dependent. N-glycosylated.

The protein localises to the apical cell membrane. It localises to the basolateral cell membrane. It is found in the cell membrane. The protein resides in the cytoplasmic vesicle membrane. Its subcellular location is the golgi apparatus. The protein localises to the trans-Golgi network membrane. The catalysed reaction is H2O(in) = H2O(out). It catalyses the reaction glycerol(in) = glycerol(out). Its function is as follows. Forms a water-specific channel that provides the plasma membranes of renal collecting duct with high permeability to water, thereby permitting water to move in the direction of an osmotic gradient. Plays an essential role in renal water homeostasis. Could also be permeable to glycerol. The chain is Aquaporin-2 from Procavia capensis habessinica (Abyssinian hyrax).